A 364-amino-acid polypeptide reads, in one-letter code: tRNA 2-selenouridine synthase (364 aa).

A Rhodanese domain is found at 14–137 (LLADTPLIDV…LRQTAIQATW (124 aa)). Cys97 serves as the catalytic S-selanylcysteine intermediate.

The protein belongs to the SelU family. In terms of assembly, monomer.

The catalysed reaction is 5-methylaminomethyl-2-thiouridine(34) in tRNA + selenophosphate + (2E)-geranyl diphosphate + H2O + H(+) = 5-methylaminomethyl-2-selenouridine(34) in tRNA + (2E)-thiogeraniol + phosphate + diphosphate. It catalyses the reaction 5-methylaminomethyl-2-thiouridine(34) in tRNA + (2E)-geranyl diphosphate = 5-methylaminomethyl-S-(2E)-geranyl-thiouridine(34) in tRNA + diphosphate. The enzyme catalyses 5-methylaminomethyl-S-(2E)-geranyl-thiouridine(34) in tRNA + selenophosphate + H(+) = 5-methylaminomethyl-2-(Se-phospho)selenouridine(34) in tRNA + (2E)-thiogeraniol. It carries out the reaction 5-methylaminomethyl-2-(Se-phospho)selenouridine(34) in tRNA + H2O = 5-methylaminomethyl-2-selenouridine(34) in tRNA + phosphate. Functionally, involved in the post-transcriptional modification of the uridine at the wobble position (U34) of tRNA(Lys), tRNA(Glu) and tRNA(Gln). Catalyzes the conversion of 2-thiouridine (S2U-RNA) to 2-selenouridine (Se2U-RNA). Acts in a two-step process involving geranylation of 2-thiouridine (S2U) to S-geranyl-2-thiouridine (geS2U) and subsequent selenation of the latter derivative to 2-selenouridine (Se2U) in the tRNA chain. This Salmonella choleraesuis (strain SC-B67) protein is tRNA 2-selenouridine synthase.